The following is a 302-amino-acid chain: Putative S-adenosyl-L-methionine-dependent methyltransferase MMAR_1068 (302 aa).

Residues D127 and 156-157 (DL) contribute to the S-adenosyl-L-methionine site.

Belongs to the UPF0677 family.

Functionally, exhibits S-adenosyl-L-methionine-dependent methyltransferase activity. The sequence is that of Putative S-adenosyl-L-methionine-dependent methyltransferase MMAR_1068 from Mycobacterium marinum (strain ATCC BAA-535 / M).